The primary structure comprises 456 residues: Hydroxyproline dehydrogenase (456 aa).

Residues Lys310 and Lys320 each carry the N6-acetyllysine modification.

It belongs to the proline oxidase family. FAD is required as a cofactor.

The catalysed reaction is trans-4-hydroxy-L-proline + a quinone = (3R,5S)-1-pyrroline-3-hydroxy-5-carboxylate + a quinol + H(+). It carries out the reaction L-proline + a quinone = (S)-1-pyrroline-5-carboxylate + a quinol + H(+). Its function is as follows. Dehydrogenase that converts trans-4-L-hydroxyproline to delta-1-pyrroline-3-hydroxy-5-carboxylate (Hyp) using ubiquinone-10 as the terminal electron acceptor. Can also use proline as a substrate but with a very much lower efficiency. Does not react with other diastereomers of Hyp: trans-4-D-hydroxyproline and cis-4-L-hydroxyproline. Ubiquininone analogs such as menadione, duroquinone and ubiquinone-1 react more efficiently than oxygen as the terminal electron acceptor during catalysis. The sequence is that of Hydroxyproline dehydrogenase from Rattus norvegicus (Rat).